The chain runs to 703 residues: Elongation factor G 1 (703 aa).

The 283-residue stretch at 8–290 folds into the tr-type G domain; the sequence is ERYRNIGISA…AVIDFLPSPV (283 aa). GTP contacts are provided by residues 17-24, 88-92, and 142-145; these read AHIDAGKT, DTPGH, and NKMD.

The protein belongs to the TRAFAC class translation factor GTPase superfamily. Classic translation factor GTPase family. EF-G/EF-2 subfamily.

The protein localises to the cytoplasm. Its function is as follows. Catalyzes the GTP-dependent ribosomal translocation step during translation elongation. During this step, the ribosome changes from the pre-translocational (PRE) to the post-translocational (POST) state as the newly formed A-site-bound peptidyl-tRNA and P-site-bound deacylated tRNA move to the P and E sites, respectively. Catalyzes the coordinated movement of the two tRNA molecules, the mRNA and conformational changes in the ribosome. The chain is Elongation factor G 1 from Ralstonia nicotianae (strain ATCC BAA-1114 / GMI1000) (Ralstonia solanacearum).